A 369-amino-acid chain; its full sequence is S-adenosylmethionine:tRNA ribosyltransferase-isomerase (369 aa).

It belongs to the QueA family. Monomer.

The protein localises to the cytoplasm. It catalyses the reaction 7-aminomethyl-7-carbaguanosine(34) in tRNA + S-adenosyl-L-methionine = epoxyqueuosine(34) in tRNA + adenine + L-methionine + 2 H(+). Its pathway is tRNA modification; tRNA-queuosine biosynthesis. Its function is as follows. Transfers and isomerizes the ribose moiety from AdoMet to the 7-aminomethyl group of 7-deazaguanine (preQ1-tRNA) to give epoxyqueuosine (oQ-tRNA). In Acaryochloris marina (strain MBIC 11017), this protein is S-adenosylmethionine:tRNA ribosyltransferase-isomerase.